Reading from the N-terminus, the 942-residue chain is Eukaryotic translation initiation factor 3 subunit A (942 aa).

A PCI domain is found at 320–494 (FKKYSSIILL…NTVTFFKDPF (175 aa)). Coiled-coil stretches lie at residues 499-529 (KAAG…GEEI), 588-669 (ITQT…KQRE), 705-734 (SKLS…AYRK), and 821-912 (IEEV…RKAQ). The disordered stretch occupies residues 502-546 (GTVEEEEEEEEEEGEEVEGEEAETGEEIVEEGEEHENEENKEPEP). The span at 504–538 (VEEEEEEEEEEGEEVEGEEAETGEEIVEEGEEHEN) shows a compositional bias: acidic residues. Basic and acidic residues-rich tracts occupy residues 836–870 (RKAE…ERKS) and 889–911 (RSAK…ERKA). The segment at 836 to 942 (RKAEIEAEER…KMKLRRASKK (107 aa)) is disordered.

Belongs to the eIF-3 subunit A family. In terms of assembly, component of the eukaryotic translation initiation factor 3 (eIF-3) complex.

It localises to the cytoplasm. RNA-binding component of the eukaryotic translation initiation factor 3 (eIF-3) complex, which is involved in protein synthesis of a specialized repertoire of mRNAs and, together with other initiation factors, stimulates binding of mRNA and methionyl-tRNAi to the 40S ribosome. The eIF-3 complex specifically targets and initiates translation of a subset of mRNAs involved in cell proliferation. The sequence is that of Eukaryotic translation initiation factor 3 subunit A from Vanderwaltozyma polyspora (strain ATCC 22028 / DSM 70294 / BCRC 21397 / CBS 2163 / NBRC 10782 / NRRL Y-8283 / UCD 57-17) (Kluyveromyces polysporus).